A 349-amino-acid chain; its full sequence is Quinone oxidoreductase-like protein 1 (349 aa).

This sequence belongs to the zinc-containing alcohol dehydrogenase family. Quinone oxidoreductase subfamily. Homodimer. Component of the FERRY complex composed of five subunits, TBCK, PPP1R21, FERRY3, CRYZL1 and GATD1 with a ratio of 1:2:1:2:4, respectively. In terms of tissue distribution, ubiquitous.

Its subcellular location is the early endosome. Component of the FERRY complex (Five-subunit Endosomal Rab5 and RNA/ribosome intermediary). The FERRY complex directly interacts with mRNAs and RAB5A, and functions as a RAB5A effector involved in the localization and the distribution of specific mRNAs most likely by mediating their endosomal transport. The complex recruits mRNAs and ribosomes to early endosomes through direct mRNA-interaction. The sequence is that of Quinone oxidoreductase-like protein 1 (CRYZL1) from Homo sapiens (Human).